The chain runs to 130 residues: Small ribosomal subunit protein uS8B (130 aa).

This sequence belongs to the universal ribosomal protein uS8 family. Component of the small ribosomal subunit (SSU). Mature yeast ribosomes consist of a small (40S) and a large (60S) subunit. The 40S small subunit contains 1 molecule of ribosomal RNA (18S rRNA) and 33 different proteins (encoded by 57 genes). The large 60S subunit contains 3 rRNA molecules (25S, 5.8S and 5S rRNA) and 46 different proteins (encoded by 81 genes).

The protein resides in the cytoplasm. Component of the ribosome, a large ribonucleoprotein complex responsible for the synthesis of proteins in the cell. The small ribosomal subunit (SSU) binds messenger RNAs (mRNAs) and translates the encoded message by selecting cognate aminoacyl-transfer RNA (tRNA) molecules. The large subunit (LSU) contains the ribosomal catalytic site termed the peptidyl transferase center (PTC), which catalyzes the formation of peptide bonds, thereby polymerizing the amino acids delivered by tRNAs into a polypeptide chain. The nascent polypeptides leave the ribosome through a tunnel in the LSU and interact with protein factors that function in enzymatic processing, targeting, and the membrane insertion of nascent chains at the exit of the ribosomal tunnel. This is Small ribosomal subunit protein uS8B from Saccharomyces cerevisiae (strain ATCC 204508 / S288c) (Baker's yeast).